The chain runs to 267 residues: Ribosomal RNA large subunit methyltransferase E (267 aa).

S-adenosyl-L-methionine contacts are provided by G50, W52, D68, D84, and D109. The active-site Proton acceptor is K149. The region spanning 196 to 255 (PLKIDDKFDVTIKKIGAKGNGIAFVEDFVVFMQDEVKKGENVRIKIVDVKPEFAFAIVIG) is the TRAM domain.

This sequence belongs to the class I-like SAM-binding methyltransferase superfamily. RNA methyltransferase RlmE family.

Its subcellular location is the cytoplasm. It carries out the reaction uridine(2552) in 23S rRNA + S-adenosyl-L-methionine = 2'-O-methyluridine(2552) in 23S rRNA + S-adenosyl-L-homocysteine + H(+). Its function is as follows. Specifically methylates the uridine in position 2552 of 23S rRNA at the 2'-O position of the ribose in the fully assembled 50S ribosomal subunit. This is Ribosomal RNA large subunit methyltransferase E from Methanococcoides burtonii (strain DSM 6242 / NBRC 107633 / OCM 468 / ACE-M).